A 184-amino-acid chain; its full sequence is ADP-ribosylation factor-like protein 2 (184 aa).

G2 carries the N-myristoyl glycine lipid modification. 23–30 provides a ligand contact to GTP; it reads GLDNAGKT. Position 45 is a phosphoserine (S45). Residues 66–70 and G68 each bind GTP; that span reads DVGGQ. K71 is covalently cross-linked (Glycyl lysine isopeptide (Lys-Gly) (interchain with G-Cter in ubiquitin)). 125-128 contributes to the GTP binding site; it reads NKQD.

Belongs to the small GTPase superfamily. Arf family. Interacts with ELMOD2. Interacts with ARL2BP; the GTP-bound form interacts with ARL2BP. The GDP-bound form interacts preferentially with TBCD. Interacts with UNC119. Found in a complex with ARL2, ARL2BP and SLC25A4. The GTP-bound form interacts with PDE6D. Found in a complex with ARL2, ARL2BP and SLC25A6. Found in a complex with at least ARL2, PPP2CB, PPP2R1A, PPP2R2A, PPP2R5E and TBCD. Not N-myristoylated. In terms of tissue distribution, expressed in liver and retina (at protein level).

The protein resides in the nucleus. Its subcellular location is the mitochondrion intermembrane space. It localises to the cytoplasm. It is found in the cytoskeleton. The protein localises to the microtubule organizing center. The protein resides in the centrosome. Its subcellular location is the mitochondrion. In terms of biological role, small GTP-binding protein which cycles between an inactive GDP-bound and an active GTP-bound form, and the rate of cycling is regulated by guanine nucleotide exchange factors (GEF) and GTPase-activating proteins (GAP). GTP-binding protein that does not act as an allosteric activator of the cholera toxin catalytic subunit. Regulates formation of new microtubules and centrosome integrity. Prevents the TBCD-induced microtubule destruction. Participates in association with TBCD, in the disassembly of the apical junction complexes. Antagonizes the effect of TBCD on epithelial cell detachment and tight and adherens junctions disassembly. Together with ARL2, plays a role in the nuclear translocation, retention and transcriptional activity of STAT3. Component of a regulated secretory pathway involved in Ca(2+)-dependent release of acetylcholine. Required for normal progress through the cell cycle. The chain is ADP-ribosylation factor-like protein 2 (ARL2) from Bos taurus (Bovine).